A 551-amino-acid polypeptide reads, in one-letter code: Scaffold protein OPG125 (551 aa).

Belongs to the orthopoxvirus protein OPG125 family. Interacts with the late transcription elongation factor VLTF-4/OPG110. Interacts with the late transcription factors VLTF-1.

Its subcellular location is the membrane. Functionally, acts with RNA polymerase to initiate transcription from late gene promoters. The protein is Scaffold protein OPG125 (OPG125) of Monkeypox virus.